Reading from the N-terminus, the 729-residue chain is Catalase-peroxidase (729 aa).

The segment at residues 95-217 (WHSAGTYRIT…LAAVQMGLIY (123 aa)) is a cross-link (tryptophyl-tyrosyl-methioninium (Trp-Tyr) (with M-243)). Catalysis depends on His96, which acts as the Proton acceptor. Positions 217–243 (YVNPEGPNGKPDPIAAATDIRETFFRM) form a cross-link, tryptophyl-tyrosyl-methioninium (Tyr-Met) (with W-95). Heme b is bound at residue His258.

Belongs to the peroxidase family. Peroxidase/catalase subfamily. As to quaternary structure, homodimer or homotetramer. Heme b is required as a cofactor. Formation of the three residue Trp-Tyr-Met cross-link is important for the catalase, but not the peroxidase activity of the enzyme.

It carries out the reaction H2O2 + AH2 = A + 2 H2O. It catalyses the reaction 2 H2O2 = O2 + 2 H2O. In terms of biological role, bifunctional enzyme with both catalase and broad-spectrum peroxidase activity. This Nitrobacter hamburgensis (strain DSM 10229 / NCIMB 13809 / X14) protein is Catalase-peroxidase.